Consider the following 505-residue polypeptide: Probable RNA exonuclease NGL3 (505 aa).

Disordered stretches follow at residues 1–75 (MDSQ…FPTP) and 334–369 (RNGEESDQDDEECDEKSRGEGHSDQPQNPKPESFTA). Over residues 10–23 (SPSQKESSSTSGLV) the composition is skewed to polar residues. Over residues 36-54 (HRDQLSVDQIKKIREERAQ) the composition is skewed to basic and acidic residues. Position 62 is a phosphoserine (Ser-62). A compositionally biased stretch (acidic residues) spans 338-347 (ESDQDDEECD).

Belongs to the CCR4/nocturin family.

In Saccharomyces cerevisiae (strain ATCC 204508 / S288c) (Baker's yeast), this protein is Probable RNA exonuclease NGL3 (NGL3).